Reading from the N-terminus, the 451-residue chain is UDP-N-acetylmuramoylalanine--D-glutamate ligase (451 aa).

Glycine 118–threonine 124 serves as a coordination point for ATP.

This sequence belongs to the MurCDEF family.

The protein localises to the cytoplasm. It catalyses the reaction UDP-N-acetyl-alpha-D-muramoyl-L-alanine + D-glutamate + ATP = UDP-N-acetyl-alpha-D-muramoyl-L-alanyl-D-glutamate + ADP + phosphate + H(+). It functions in the pathway cell wall biogenesis; peptidoglycan biosynthesis. In terms of biological role, cell wall formation. Catalyzes the addition of glutamate to the nucleotide precursor UDP-N-acetylmuramoyl-L-alanine (UMA). This Shouchella clausii (strain KSM-K16) (Alkalihalobacillus clausii) protein is UDP-N-acetylmuramoylalanine--D-glutamate ligase.